The following is an 83-amino-acid chain: Sec-independent protein translocase protein TatA (83 aa).

The helical transmembrane segment at 1-21 threads the bilayer; sequence MGNMGIWQLLIIAVIVILLFG. Composition is skewed to basic and acidic residues over residues 47 to 57 and 71 to 83; these read EEKKALEETAS and AEKK…KEQV. The tract at residues 47-83 is disordered; the sequence is EEKKALEETASEKATPSVEKTAPNAEKKTETKDKEQV.

This sequence belongs to the TatA/E family. As to quaternary structure, the Tat system comprises two distinct complexes: a TatABC complex, containing multiple copies of TatA, TatB and TatC subunits, and a separate TatA complex, containing only TatA subunits. Substrates initially bind to the TatABC complex, which probably triggers association of the separate TatA complex to form the active translocon.

Its subcellular location is the cell inner membrane. Functionally, part of the twin-arginine translocation (Tat) system that transports large folded proteins containing a characteristic twin-arginine motif in their signal peptide across membranes. TatA could form the protein-conducting channel of the Tat system. The chain is Sec-independent protein translocase protein TatA from Shewanella woodyi (strain ATCC 51908 / MS32).